The following is a 249-amino-acid chain: MKVHRIVFLTVLTFFLTACDVDLYRSLPEDEANQMLALLMQHHIDAEKKQEEDGVTLRVEQSQFINAVELLRLNGYPHRQFTTADKMFPANQLVVSPQEEQQKINFLKEQRIEGMLSQMEGVINAKVTIALPTYDEGSNASPSSVAVFIKYSPQVNMEAFRVKIKDLIEMSIPGLQYSKISILMQPAEFRMVADVPARQTFWIMDVINANKGKVVKWLMKYPYPLMLSLTGLLLGVGILIGYFCLRRRF.

Positions 1–18 (MKVHRIVFLTVLTFFLTA) are cleaved as a signal peptide. C19 carries the N-palmitoyl cysteine lipid modification. Residue C19 is the site of S-diacylglycerol cysteine attachment. A helical transmembrane segment spans residues 225-245 (LMLSLTGLLLGVGILIGYFCL).

This sequence belongs to the YscJ lipoprotein family.

Its subcellular location is the cell outer membrane. In terms of biological role, component of Salmonella pathogenicity island 2 (SPI-2) type III secretion system, required for secretion of some type III-secreted effectors including the SpvB exotoxin. This Salmonella typhimurium (strain 14028s / SGSC 2262) protein is Secretion system apparatus lipoprotein SsaJ (ssaJ).